The sequence spans 90 residues: Mitochondrial import inner membrane translocase subunit Tim10 (90 aa).

The short motif at 29–54 is the Twin CX3C motif element; sequence CHRKCVPPHYKEAELSKGESVCLDRC. 2 disulfide bridges follow: Cys-29/Cys-54 and Cys-33/Cys-50.

Belongs to the small Tim family. Heterohexamer; composed of 3 copies of TIMM9 and 3 copies of TIMM10/TIM10A, named soluble 70 kDa complex. The complex forms a 6-bladed alpha-propeller structure and associates with the TIMM22 component of the TIM22 complex. Interacts with multi-pass transmembrane proteins in transit. Also forms a complex composed of TIMM9, TIMM10/TIM10A and FXC1/TIM10B.

Its subcellular location is the mitochondrion inner membrane. In terms of biological role, mitochondrial intermembrane chaperone that participates in the import and insertion of multi-pass transmembrane proteins into the mitochondrial inner membrane. May also be required for the transfer of beta-barrel precursors from the TOM complex to the sorting and assembly machinery (SAM complex) of the outer membrane. Acts as a chaperone-like protein that protects the hydrophobic precursors from aggregation and guide them through the mitochondrial intermembrane space. The protein is Mitochondrial import inner membrane translocase subunit Tim10 (Timm10) of Rattus norvegicus (Rat).